Consider the following 346-residue polypeptide: Dynein regulatory complex protein 9 (346 aa).

A compositionally biased stretch (basic and acidic residues) spans methionine 299–alanine 308. Residues methionine 299–lysine 346 are disordered. Residues glutamate 305–lysine 334 enclose the IQ domain. The span at lysine 323 to lysine 346 shows a compositional bias: basic residues.

It belongs to the DRC9 family. Component of the nexin-dynein regulatory complex (N-DRC). Interacts (via IQ domain) with calmodulin when calcium levels are low. Does not interact with calmodulin in the presence of Ca(2+). Interacts with hsp70 and may form a complex with camk4 and hsp70. In terms of tissue distribution, detected in adult testis, and at lower levels in brain, kidney and ovary.

The protein resides in the cytoplasm. The protein localises to the cell projection. It localises to the cilium. It is found in the flagellum. Its subcellular location is the cytoskeleton. The protein resides in the flagellum axoneme. Its function is as follows. Component of the nexin-dynein regulatory complex (N-DRC), a key regulator of ciliary/flagellar motility which maintains the alignment and integrity of the distal axoneme and regulates microtubule sliding in motile axonemes. Binds calmodulin when cellular Ca(2+) levels are low and thereby contributes to the regulation of calcium and calmodulin-dependent protein kinase IV (camk4) activity; contributes to the regulation of camk4 signaling cascades. Plays a role in the regulation of definitive hematopoiesis via its effects on camk4. The protein is Dynein regulatory complex protein 9 of Danio rerio (Zebrafish).